A 428-amino-acid polypeptide reads, in one-letter code: Monocarboxylate transporter 13 (428 aa).

Over 1 to 10 (MVHRTEPPDG) the chain is Cytoplasmic. Transmembrane regions (helical) follow at residues 11–31 (GWGW…FGVL), 52–72 (VSWI…IGSA), 81–101 (PVVM…SFAT), 106–126 (LYLS…TPTL), 139–159 (LAMG…APLF), 172–192 (LLLV…LRPL), 221–241 (VALT…VAHL), 244–264 (LGWD…SDLV), 283–303 (LLML…VAQA), 309–329 (VLAV…FSVI), 338–358 (IYCG…LGAP), and 374–394 (FVVA…LPHF). Residues 395 to 428 (FSCISLSTSRPQDLVIEAPDTKIPLPKEEGLGEN) are Cytoplasmic-facing.

It belongs to the major facilitator superfamily. Monocarboxylate porter (TC 2.A.1.13) family.

It localises to the golgi apparatus membrane. Its subcellular location is the cell membrane. Proton-linked monocarboxylate transporter. May catalyze the transport of monocarboxylates across the plasma membrane. The chain is Monocarboxylate transporter 13 (Slc16a13) from Rattus norvegicus (Rat).